Reading from the N-terminus, the 394-residue chain is Elongation factor Tu (394 aa).

The tr-type G domain occupies 10–204; sequence KPHVNIGTIG…AVDSYIPQPV (195 aa). Residues 19–26 form a G1 region; that stretch reads GHVDHGKT. 19-26 provides a ligand contact to GTP; it reads GHVDHGKT. Residue Thr-26 participates in Mg(2+) binding. The tract at residues 60–64 is G2; that stretch reads GITIS. The tract at residues 81–84 is G3; that stretch reads DCPG. GTP contacts are provided by residues 81–85 and 136–139; these read DCPGH and NKVD. The G4 stretch occupies residues 136 to 139; it reads NKVD. The tract at residues 174–176 is G5; the sequence is SAL.

Belongs to the TRAFAC class translation factor GTPase superfamily. Classic translation factor GTPase family. EF-Tu/EF-1A subfamily. Monomer.

It is found in the cytoplasm. The enzyme catalyses GTP + H2O = GDP + phosphate + H(+). GTP hydrolase that promotes the GTP-dependent binding of aminoacyl-tRNA to the A-site of ribosomes during protein biosynthesis. This Rickettsia helvetica protein is Elongation factor Tu.